A 113-amino-acid chain; its full sequence is UPF0122 protein SSU98_0878 (113 aa).

It belongs to the UPF0122 family.

Its function is as follows. Might take part in the signal recognition particle (SRP) pathway. This is inferred from the conservation of its genetic proximity to ftsY/ffh. May be a regulatory protein. The chain is UPF0122 protein SSU98_0878 from Streptococcus suis (strain 98HAH33).